A 389-amino-acid polypeptide reads, in one-letter code: Formate-dependent phosphoribosylglycinamide formyltransferase (389 aa).

Residues 15-16 and E75 each bind N(1)-(5-phospho-beta-D-ribosyl)glycinamide; that span reads EL. ATP contacts are provided by residues R107, K148, 153–158, 188–191, and E196; these read SSGKGQ and EEFL. One can recognise an ATP-grasp domain in the interval 112-302; the sequence is NLAAGELGLR…EFDLHLRAVL (191 aa). 2 residues coordinate Mg(2+): E261 and E273. N(1)-(5-phospho-beta-D-ribosyl)glycinamide contacts are provided by residues D280, K350, and 357–358; that span reads RR.

It belongs to the PurK/PurT family. In terms of assembly, homodimer.

It catalyses the reaction N(1)-(5-phospho-beta-D-ribosyl)glycinamide + formate + ATP = N(2)-formyl-N(1)-(5-phospho-beta-D-ribosyl)glycinamide + ADP + phosphate + H(+). Its pathway is purine metabolism; IMP biosynthesis via de novo pathway; N(2)-formyl-N(1)-(5-phospho-D-ribosyl)glycinamide from N(1)-(5-phospho-D-ribosyl)glycinamide (formate route): step 1/1. Involved in the de novo purine biosynthesis. Catalyzes the transfer of formate to 5-phospho-ribosyl-glycinamide (GAR), producing 5-phospho-ribosyl-N-formylglycinamide (FGAR). Formate is provided by PurU via hydrolysis of 10-formyl-tetrahydrofolate. This chain is Formate-dependent phosphoribosylglycinamide formyltransferase, found in Synechococcus sp. (strain CC9311).